The primary structure comprises 354 residues: Myosin-binding protein H-like (354 aa).

Residues 1–47 (MEAATAPEVAAGSKLKVKEASPADAEPPQASPGQGAGSPTPQLLPPI) are disordered. S38 carries the phosphoserine modification. The 95-residue stretch at 45–139 (PPIEEHPKIW…GGLEATATID (95 aa)) folds into the Ig-like C2-type 1 domain. Positions 148–238 (PPQSIKLVDV…ETAPITTDLA (91 aa)) constitute a Fibronectin type-III domain. The region spanning 261–345 (PKFTQPLADC…VNPLGEASVD (85 aa)) is the Ig-like C2-type 2 domain. A disulfide bridge connects residues C282 and C333. R321 carries the omega-N-methylarginine modification.

Belongs to the immunoglobulin superfamily. MyBP family. Expressed in heart, with higher expression in the atria. As to expression, expressed in left atrium and ventricle, arteria mammaria interna and skeletal muscle. In terms of tissue distribution, expressed specifically en the left atrium.

It localises to the cytoplasm. It is found in the myofibril. Its subcellular location is the sarcomere. Myosin-binding protein which plays a role in cardiac function. Seems to regulate conduction in the atria and ventricular conduction systems. The protein is Myosin-binding protein H-like of Homo sapiens (Human).